Consider the following 418-residue polypeptide: Dihydrofolate synthase/folylpolyglutamate synthase (418 aa).

Position 53-56 (53-56 (GKGT)) interacts with ATP. Position 77 (Ser-77) interacts with Mg(2+). Position 116-119 (116-119 (TYFE)) interacts with 7,8-dihydropteroate. Glu-140 contacts Mg(2+). 147-149 (LDA) contributes to the 7,8-dihydropteroate binding site. His-167 is a Mg(2+) binding site. Residues Asn-252, Arg-284, and Asp-297 each contribute to the ATP site.

This sequence belongs to the folylpolyglutamate synthase family. In terms of assembly, monomer. It depends on Mg(2+) as a cofactor.

It catalyses the reaction 7,8-dihydropteroate + L-glutamate + ATP = 7,8-dihydrofolate + ADP + phosphate + H(+). The enzyme catalyses (6S)-5,6,7,8-tetrahydrofolyl-(gamma-L-Glu)(n) + L-glutamate + ATP = (6S)-5,6,7,8-tetrahydrofolyl-(gamma-L-Glu)(n+1) + ADP + phosphate + H(+). The catalysed reaction is 10-formyltetrahydrofolyl-(gamma-L-Glu)(n) + L-glutamate + ATP = 10-formyltetrahydrofolyl-(gamma-L-Glu)(n+1) + ADP + phosphate + H(+). It carries out the reaction (6R)-5,10-methylenetetrahydrofolyl-(gamma-L-Glu)(n) + L-glutamate + ATP = (6R)-5,10-methylenetetrahydrofolyl-(gamma-L-Glu)(n+1) + ADP + phosphate + H(+). It functions in the pathway cofactor biosynthesis; tetrahydrofolate biosynthesis; 7,8-dihydrofolate from 2-amino-4-hydroxy-6-hydroxymethyl-7,8-dihydropteridine diphosphate and 4-aminobenzoate: step 2/2. Its pathway is cofactor biosynthesis; tetrahydrofolylpolyglutamate biosynthesis. Functionally, functions in two distinct reactions of the de novo folate biosynthetic pathway. Catalyzes the addition of a glutamate residue to dihydropteroate (7,8-dihydropteroate or H2Pte) to form dihydrofolate (7,8-dihydrofolate monoglutamate or H2Pte-Glu). Also catalyzes successive additions of L-glutamate to tetrahydrofolate or 10-formyltetrahydrofolate or 5,10-methylenetetrahydrofolate, leading to folylpolyglutamate derivatives. This chain is Dihydrofolate synthase/folylpolyglutamate synthase (folC), found in Buchnera aphidicola subsp. Schizaphis graminum (strain Sg).